Reading from the N-terminus, the 159-residue chain is Probable histone H2A.5 (159 aa).

Gly residues predominate over residues 1–10 (MDAAGAGAGG). Disordered stretches follow at residues 1 to 29 (MDAA…KKAV) and 136 to 159 (EKAA…PKKA). 2 stretches are compositionally biased toward basic residues: residues 11–29 (KLKK…KKAV) and 148–159 (PKKAAGKSPKKA). 2 short sequence motifs (SPKK motif) span residues 147-150 (SPKK) and 155-158 (SPKK).

It belongs to the histone H2A family. As to quaternary structure, the nucleosome is a histone octamer containing two molecules each of H2A, H2B, H3 and H4 assembled in one H3-H4 heterotetramer and two H2A-H2B heterodimers. The octamer wraps approximately 147 bp of DNA.

The protein resides in the nucleus. The protein localises to the chromosome. Functionally, core component of nucleosome. Nucleosomes wrap and compact DNA into chromatin, limiting DNA accessibility to the cellular machineries which require DNA as a template. Histones thereby play a central role in transcription regulation, DNA repair, DNA replication and chromosomal stability. DNA accessibility is regulated via a complex set of post-translational modifications of histones, also called histone code, and nucleosome remodeling. In Oryza sativa subsp. indica (Rice), this protein is Probable histone H2A.5.